We begin with the raw amino-acid sequence, 142 residues long: Ribosome maturation factor RimP (142 aa).

Belongs to the RimP family.

It is found in the cytoplasm. Required for maturation of 30S ribosomal subunits. This Nitratiruptor sp. (strain SB155-2) protein is Ribosome maturation factor RimP.